The sequence spans 240 residues: Caffeoyl-CoA O-methyltransferase 5 (240 aa).

Residue Lys14 participates in substrate binding. S-adenosyl-L-methionine-binding positions include Thr56, Glu78, 80–81, Ser86, Asp104, and Ala133; that span reads GV. Asp156 contacts substrate. Asp156 lines the a divalent metal cation pocket. S-adenosyl-L-methionine is bound at residue Asp158. Residues Asp182 and Asn183 each coordinate a divalent metal cation. Residue Asn187 participates in substrate binding.

The protein belongs to the class I-like SAM-binding methyltransferase superfamily. Cation-dependent O-methyltransferase family. CCoAMT subfamily. The cofactor is Mg(2+). In terms of tissue distribution, expression steadily increases from the bottom to the top of the plant.

It carries out the reaction (E)-caffeoyl-CoA + S-adenosyl-L-methionine = (E)-feruloyl-CoA + S-adenosyl-L-homocysteine + H(+). Its pathway is aromatic compound metabolism; phenylpropanoid biosynthesis. In terms of biological role, methylates caffeoyl-CoA to feruloyl-CoA and 5-hydroxyferuloyl-CoA to sinapoyl-CoA. Plays a role in the synthesis of feruloylated polysaccharides. Involved in the reinforcement of the plant cell wall. Also involved in the responding to wounding or pathogen challenge by the increased formation of cell wall-bound ferulic acid polymers. Methylates 5-hydroxyferulolyl-CoA more efficiently than caffeoyl-CoA. In Nicotiana tabacum (Common tobacco), this protein is Caffeoyl-CoA O-methyltransferase 5 (CCOAOMT5).